The following is a 152-amino-acid chain: Transcriptional repressor NrdR (152 aa).

A zinc finger spans residues 3–34 (CPYCSYNESKVVDSRSTEDSISIRRRRECLEC). Residues 49 to 139 (ILVIKKNLNR…VYRQFKDINT (91 aa)) enclose the ATP-cone domain.

The protein belongs to the NrdR family. Requires Zn(2+) as cofactor.

Functionally, negatively regulates transcription of bacterial ribonucleotide reductase nrd genes and operons by binding to NrdR-boxes. The sequence is that of Transcriptional repressor NrdR from Clostridium tetani (strain Massachusetts / E88).